The primary structure comprises 53 residues: ATP synthase protein 8 (53 aa).

The helical transmembrane segment at 5 to 25 (APISWLTLFFVFSITLVIFNI) threads the bilayer.

Belongs to the ATPase protein 8 family. In terms of assembly, F-type ATPases have 2 components, CF(1) - the catalytic core - and CF(0) - the membrane proton channel.

It localises to the mitochondrion membrane. Its function is as follows. Mitochondrial membrane ATP synthase (F(1)F(O) ATP synthase or Complex V) produces ATP from ADP in the presence of a proton gradient across the membrane which is generated by electron transport complexes of the respiratory chain. F-type ATPases consist of two structural domains, F(1) - containing the extramembraneous catalytic core and F(0) - containing the membrane proton channel, linked together by a central stalk and a peripheral stalk. During catalysis, ATP synthesis in the catalytic domain of F(1) is coupled via a rotary mechanism of the central stalk subunits to proton translocation. Part of the complex F(0) domain. Minor subunit located with subunit a in the membrane. The sequence is that of ATP synthase protein 8 from Aedes aegypti (Yellowfever mosquito).